The following is a 740-amino-acid chain: ATP-dependent RNA helicase DDX1 (740 aa).

Residues 1-295 (MAAFSEMGVM…APKALIVEPS (295 aa)) are necessary for interaction with HNRNPK. Residues 1-448 (MAAFSEMGVM…DTVHHVVVPV (448 aa)) are interaction with dsRNA. Residues 1–525 (MAAFSEMGVM…KIDCDNLEQY (525 aa)) are necessary for interaction with RELA. Positions 2 to 428 (AAFSEMGVMP…SEKIMHFPTW (427 aa)) constitute a Helicase ATP-binding domain. 46-53 (AETGSGKT) contributes to the ATP binding site. Residues 70–247 (DQQEGKKGKT…LKFNFGEEEF (178 aa)) enclose the B30.2/SPRY domain. N6-acetyllysine occurs at positions 239 and 268. At Lys-281 the chain carries N6-acetyllysine; alternate. Lys-281 is covalently cross-linked (Glycyl lysine isopeptide (Lys-Gly) (interchain with G-Cter in SUMO2); alternate). The DEAD box signature appears at 370–373 (DEAD). Ser-481 bears the Phosphoserine mark. Residues 493–681 (KGEYAVRAIK…QVEPDIKVPV (189 aa)) enclose the Helicase C-terminal domain. The tract at residues 525 to 740 (YFMQQGGGPD…YLPNQLFRTF (216 aa)) is necessary for interaction with HNRNPK.

It belongs to the DEAD box helicase family. DDX1 subfamily. In terms of assembly, found in a multi-helicase-TICAM1 complex at least composed of DHX36, DDX1, DDX21 and TICAM1; this complex exists in resting cells with or without poly(I:C) RNA ligand stimulation. Interacts with DHX36. Interacts (via B30.2/SPRY domain) with DDX21 (via N-terminus); this interaction serves as bridges to TICAM1. Interacts with FAM98A (via N- and C-terminus). Interacts with MBNL1. Interacts with CSTF2. Interacts with HNRNPK. Interacts with ATM. Interacts with RELA (via C-terminus). Component of the tRNA-splicing ligase complex. Interacts with PHF5A (via C-terminus). Interacts with PQBP1. Interacts with ERCC6. Phosphorylated by ATM kinase; phosphorylation is increased in response to ionizing radiation (IR). As to expression, testis-specific. Expressed in the germ line stem cells, spermatogonia and spermatocytes of the testis. Also expressed in the seminoma and nonseminoma types of testicular germ cell tumors (TGCTs) (at protein level).

It localises to the nucleus. Its subcellular location is the cytoplasm. It is found in the cytosol. The protein resides in the cytoplasmic granule. The protein localises to the mitochondrion. It catalyses the reaction ATP + H2O = ADP + phosphate + H(+). In terms of biological role, acts as an ATP-dependent RNA helicase, able to unwind both RNA-RNA and RNA-DNA duplexes. Possesses 5' single-stranded RNA overhang nuclease activity. Possesses ATPase activity on various RNA, but not DNA polynucleotides. May play a role in RNA clearance at DNA double-strand breaks (DSBs), thereby facilitating the template-guided repair of transcriptionally active regions of the genome. Together with RELA, acts as a coactivator to enhance NF-kappa-B-mediated transcriptional activation. Acts as a positive transcriptional regulator of cyclin CCND2 expression. Binds to the cyclin CCND2 promoter region. Associates with chromatin at the NF-kappa-B promoter region via association with RELA. Binds to poly(A) RNA. May be involved in 3'-end cleavage and polyadenylation of pre-mRNAs. Component of the tRNA-splicing ligase complex required to facilitate the enzymatic turnover of catalytic subunit RTCB: together with archease (ZBTB8OS), acts by facilitating the guanylylation of RTCB, a key intermediate step in tRNA ligation. Component of a multi-helicase-TICAM1 complex that acts as a cytoplasmic sensor of viral double-stranded RNA (dsRNA) and plays a role in the activation of a cascade of antiviral responses including the induction of pro-inflammatory cytokines via the adapter molecule TICAM1. Specifically binds (via helicase ATP-binding domain) on both short and long poly(I:C) dsRNA. The sequence is that of ATP-dependent RNA helicase DDX1 (Ddx1) from Mus musculus (Mouse).